A 231-amino-acid chain; its full sequence is Large ribosomal subunit protein uL1 (231 aa).

The protein belongs to the universal ribosomal protein uL1 family. Part of the 50S ribosomal subunit.

Binds directly to 23S rRNA. The L1 stalk is quite mobile in the ribosome, and is involved in E site tRNA release. In terms of biological role, protein L1 is also a translational repressor protein, it controls the translation of the L11 operon by binding to its mRNA. The protein is Large ribosomal subunit protein uL1 of Polaromonas naphthalenivorans (strain CJ2).